Reading from the N-terminus, the 295-residue chain is Nucleotide-binding protein Sare_3328 (295 aa).

19–26 (GVSGGGRS) lines the ATP pocket. Position 70–73 (70–73 (DVRS)) interacts with GTP.

This sequence belongs to the RapZ-like family.

Functionally, displays ATPase and GTPase activities. In Salinispora arenicola (strain CNS-205), this protein is Nucleotide-binding protein Sare_3328.